Reading from the N-terminus, the 558-residue chain is INCREASED PETAL GROWTH ANISOTROPY 1-like protein 2 (558 aa).

Residues Met-1–Arg-15 are compositionally biased toward low complexity. Positions Met-1–Arg-54 are disordered. Residues Val-104 to Asn-180 are a coiled coil. The tract at residues Lys-207–Val-285 is disordered. 2 stretches are compositionally biased toward pro residues: residues Pro-221–Pro-236 and Phe-256–Pro-272. The stretch at Lys-392 to Leu-448 forms a coiled coil.

It belongs to the IPGA1 family.

The protein localises to the cytoplasm. Its subcellular location is the cytoskeleton. Its function is as follows. Microtubule-associated protein probably involved in the regulation of microtubule organization. This Arabidopsis thaliana (Mouse-ear cress) protein is INCREASED PETAL GROWTH ANISOTROPY 1-like protein 2.